Reading from the N-terminus, the 177-residue chain is Cytochrome c oxidase assembly protein CtaG (177 aa).

At 1–8 (MTQKAKNT) the chain is on the cytoplasmic side. Residues 9–29 (IYLLILIILSMLCLVYASVPL) form a helical; Signal-anchor for type II membrane protein membrane-spanning segment. Residues 30–177 (YSIFCKVTGY…TFFKYKETTK (148 aa)) are Periplasmic-facing.

This sequence belongs to the COX11/CtaG family.

The protein resides in the cell inner membrane. Its function is as follows. Exerts its effect at some terminal stage of cytochrome c oxidase synthesis, probably by being involved in the insertion of the copper B into subunit I. The polypeptide is Cytochrome c oxidase assembly protein CtaG (Ehrlichia ruminantium (strain Gardel)).